The primary structure comprises 156 residues: MPRRRVIGQRKILPDPKFGSELLAKFVNILMVDGKKSTAEAIVYTALETLAQRSGKGHLEAFEVALDNVRPTVEVKSRRVGGSTYQVPVEVRPVRRNALAMRWIVEAARKRGDKSMALRLANELSDAAENKGTAVKKREDVHRMAEANKAFAHYRW.

Belongs to the universal ribosomal protein uS7 family. As to quaternary structure, part of the 30S ribosomal subunit. Contacts proteins S9 and S11.

Its function is as follows. One of the primary rRNA binding proteins, it binds directly to 16S rRNA where it nucleates assembly of the head domain of the 30S subunit. Is located at the subunit interface close to the decoding center, probably blocks exit of the E-site tRNA. In Pectobacterium atrosepticum (strain SCRI 1043 / ATCC BAA-672) (Erwinia carotovora subsp. atroseptica), this protein is Small ribosomal subunit protein uS7.